The chain runs to 339 residues: Glycerol-3-phosphate dehydrogenase [NAD(P)+] (339 aa).

4 residues coordinate NADPH: S15, Y16, H36, and K110. Positions 110, 139, and 141 each coordinate sn-glycerol 3-phosphate. A143 contacts NADPH. Residues K195, D248, S258, R259, and N260 each coordinate sn-glycerol 3-phosphate. The active-site Proton acceptor is K195. Residue R259 coordinates NADPH. NADPH contacts are provided by V283 and E285.

It belongs to the NAD-dependent glycerol-3-phosphate dehydrogenase family.

It localises to the cytoplasm. It carries out the reaction sn-glycerol 3-phosphate + NAD(+) = dihydroxyacetone phosphate + NADH + H(+). It catalyses the reaction sn-glycerol 3-phosphate + NADP(+) = dihydroxyacetone phosphate + NADPH + H(+). The protein operates within membrane lipid metabolism; glycerophospholipid metabolism. In terms of biological role, catalyzes the reduction of the glycolytic intermediate dihydroxyacetone phosphate (DHAP) to sn-glycerol 3-phosphate (G3P), the key precursor for phospholipid synthesis. The chain is Glycerol-3-phosphate dehydrogenase [NAD(P)+] from Shigella boydii serotype 18 (strain CDC 3083-94 / BS512).